A 284-amino-acid polypeptide reads, in one-letter code: MNKQQLKAYFMLMRLHRPIPILLILWPTLTALVLASHGLPDISYLVIFTIGVVVMRTVGCIINDIADVDFDKHVARTNTRPLTSGQLSIKNAIWLCISLTLVAFICVLFLNLYTILLSFVALFLAILYPFCKRFFAIPQLILGLAFNFGIFMAFSAIQNQIPVEAWIFYLATICWTIAYDTIYALADREFDLEIGIKSSAVLFGNKVFRYILLFNFLSLLLLIILGIYCDFNSFFYLGVVICSLFFVRNYFLYKKLGITNCINAFSANHWIGLIIFIMAVIQYI.

A run of 9 helical transmembrane segments spans residues 19 to 39 (IPIL…SHGL), 42 to 62 (ISYL…GCII), 85 to 105 (GQLS…VAFI), 107 to 127 (VLFL…LAIL), 134 to 154 (FFAI…FMAF), 165 to 185 (AWIF…IYAL), 211 to 231 (ILLF…YCDF), 233 to 253 (SFFY…YFLY), and 261 to 281 (CINA…MAVI).

It belongs to the UbiA prenyltransferase family. Requires Mg(2+) as cofactor.

It is found in the cell inner membrane. It carries out the reaction all-trans-octaprenyl diphosphate + 4-hydroxybenzoate = 4-hydroxy-3-(all-trans-octaprenyl)benzoate + diphosphate. The protein operates within cofactor biosynthesis; ubiquinone biosynthesis. In terms of biological role, catalyzes the prenylation of para-hydroxybenzoate (PHB) with an all-trans polyprenyl group. Mediates the second step in the final reaction sequence of ubiquinone-8 (UQ-8) biosynthesis, which is the condensation of the polyisoprenoid side chain with PHB, generating the first membrane-bound Q intermediate 3-octaprenyl-4-hydroxybenzoate. The chain is 4-hydroxybenzoate octaprenyltransferase from Francisella tularensis subsp. novicida (strain U112).